A 940-amino-acid chain; its full sequence is Insulin receptor substrate 1 (940 aa).

Residues 8 to 109 form the PH domain; the sequence is GMVLSGYHKK…WLDKLLLLQR (102 aa). Residues 122-236 enclose the IRS-type PTB domain; it reads YEHVWQVIIQ…SAMSAKTDSN (115 aa). Serine 284, serine 285, and serine 340 each carry phosphoserine. Residue tyrosine 407 is modified to Phosphotyrosine; by INSR. Residues 407–410 carry the YXXM motif 1 motif; it reads YIPM. The segment covering 523–540 has biased composition (polar residues); sequence NRSQNNISKEGPISGTST. Residues 523–549 are disordered; sequence NRSQNNISKEGPISGTSTNREKKSTSA. A Phosphoserine modification is found at serine 548. The short motif at 639 to 642 is the YXXM motif 2 element; it reads YLEM. A Phosphotyrosine; by INSR modification is found at tyrosine 883. The interval 895-915 is disordered; the sequence is NPAKYLKRGSRESPPVATCAE. Phosphoserine occurs at positions 904 and 907. Residue tyrosine 920 is modified to Phosphotyrosine; by INSR.

Bindings to phosphatidylinositol 3-kinase and SHP2.

Its function is as follows. Activates phosphatidylinositol 3-kinase when bound to the regulatory p85 subunit. May mediate the control of various cellular processes by insulin-like peptides. When phosphorylated by the insulin receptor binds specifically to various cellular proteins containing SH2 domains. Involved in control of cell proliferation, cell size, and body and organ growth throughout development. Also has a role in a signaling pathway controlling the physiological response required to endure periods of low nutrient conditions. Insulin/insulin-like growth factor (IGF) signaling pathway has a role in regulating aging and is necessary in the ovary for vitellogenic maturation. The protein is Insulin receptor substrate 1 of Drosophila ananassae (Fruit fly).